The sequence spans 602 residues: Protein SHORT-ROOT 1 (602 aa).

Over residues 12 to 55 (AASEQQQQQQQSASYNSRSTTSSGSRSSSHQTNASYSYYHHSSN) the composition is skewed to low complexity. Disordered regions lie at residues 12–69 (AASE…YYYG), 101–145 (DFSS…TAAG), and 165–185 (DFSS…AVGG). A compositionally biased stretch (gly residues) spans 56 to 68 (SGGGGGGGGGYYY). The span at 122–145 (PPASSTPTGTAPTPPLSTSSTAAG) shows a compositional bias: low complexity. Over residues 173–185 (SGGGTASSGAVGG) the composition is skewed to gly residues. One can recognise a GRAS domain in the interval 183–601 (VGGGGGGRWA…QPLVWASAWR (419 aa)). Residues 190-253 (RWASQLLLEC…LTASGPRTLR (64 aa)) are leucine repeat I (LRI). Residues 272–349 (ALRFQELSPW…PHLSITTVVS (78 aa)) form a VHIID region. Residues 311-315 (FHILD) carry the VHIID motif. The tract at residues 365 to 401 (EIGQRMEKFARLMGVPFRFRAVHHSGDLAELDLDALD) is leucine repeat II (LRII). The interval 411–517 (LAVNCVNSLR…ERGAGRAIVD (107 aa)) is PFYRE. Positions 520 to 601 (SCPASESMER…QPLVWASAWR (82 aa)) are SAW.

This sequence belongs to the GRAS family. As to quaternary structure, interacts with SCR1. Interacts with SMOS1. In terms of tissue distribution, expressed in leaves and roots. Detected in the stele, the endodermis and part of the cortex.

The protein localises to the nucleus. In terms of biological role, transcription factor required for the asymmetric cell division involved in radial pattern formation in roots. Essential for both cell division and cell specification. This chain is Protein SHORT-ROOT 1, found in Oryza sativa subsp. japonica (Rice).